The chain runs to 864 residues: DNA mismatch repair protein MutS (864 aa).

An ATP-binding site is contributed by 607–614 (GPNMGGKS).

Belongs to the DNA mismatch repair MutS family.

In terms of biological role, this protein is involved in the repair of mismatches in DNA. It is possible that it carries out the mismatch recognition step. This protein has a weak ATPase activity. The chain is DNA mismatch repair protein MutS from Neisseria gonorrhoeae (strain ATCC 700825 / FA 1090).